The sequence spans 669 residues: UvrABC system protein B (669 aa).

One can recognise a Helicase ATP-binding domain in the interval E27 to R414. G40 to T47 contacts ATP. The short motif at Y93–I116 is the Beta-hairpin element. The Helicase C-terminal domain maps to Q431–I597. Residues P628–R663 form the UVR domain.

The protein belongs to the UvrB family. In terms of assembly, forms a heterotetramer with UvrA during the search for lesions. Interacts with UvrC in an incision complex.

It localises to the cytoplasm. Functionally, the UvrABC repair system catalyzes the recognition and processing of DNA lesions. A damage recognition complex composed of 2 UvrA and 2 UvrB subunits scans DNA for abnormalities. Upon binding of the UvrA(2)B(2) complex to a putative damaged site, the DNA wraps around one UvrB monomer. DNA wrap is dependent on ATP binding by UvrB and probably causes local melting of the DNA helix, facilitating insertion of UvrB beta-hairpin between the DNA strands. Then UvrB probes one DNA strand for the presence of a lesion. If a lesion is found the UvrA subunits dissociate and the UvrB-DNA preincision complex is formed. This complex is subsequently bound by UvrC and the second UvrB is released. If no lesion is found, the DNA wraps around the other UvrB subunit that will check the other stand for damage. This is UvrABC system protein B from Synechocystis sp. (strain ATCC 27184 / PCC 6803 / Kazusa).